Here is a 370-residue protein sequence, read N- to C-terminus: MLGAVEGPRWKQAEDIRDIYDFRDVLGTGAFSEVILAEDKRTQKLVAIKCIAKEALEGKEGSMENEIAVLHKIKHPNIVALDDIYESGGHLYLIMQLVSGGELFDRIVEKGFYTERDASRLIFQVLDAVKYLHDLGIVHRDLKPENLLYYSLDEDSKIMISDFGLSKMEDPGSVLSTACGTPGYVAPEVLAQKPYSKAVDCWSIGVIAYILLCGYPPFYDENDAKLFEQILKAEYEFDSPYWDDISDSAKDFIRHLMEKDPEKRFTCEQALQHPWIAGDTALDKNIHQSVSEQIKKNFAKSKWKQAFNATAVVRHMRKLQLGTSQEGQGQTASHGELLTPVAGGPAAGCCCRDCCVEPGTELSPTLPHQL.

The Protein kinase domain occupies 20–276; sequence YDFRDVLGTG…CEQALQHPWI (257 aa). ATP is bound by residues 26–34 and Lys-49; that span reads LGTGAFSEV. Lys-59 participates in a covalent cross-link: Glycyl lysine isopeptide (Lys-Gly) (interchain with G-Cter in ubiquitin). The Proton acceptor role is filled by Asp-141. Thr-177 is subject to Phosphothreonine; by CaMKK1 and CaMKK2. Residues 276–316 are autoinhibitory domain; the sequence is IAGDTALDKNIHQSVSEQIKKNFAKSKWKQAFNATAVVRHM. Residues 296–317 are calmodulin-binding; it reads KNFAKSKWKQAFNATAVVRHMR. The short motif at 315 to 321 is the Nuclear export signal element; the sequence is HMRKLQL. Ser-363 is modified (phosphoserine).

It belongs to the protein kinase superfamily. CAMK Ser/Thr protein kinase family. CaMK subfamily. Monomer. Interacts with XPO1. Interacts with MARK2, ARHGEF7/BETAPIX and GIT1. In terms of processing, phosphorylated by CaMKK1 and CaMKK2 on Thr-177. Polybiquitinated by the E3 ubiquitin-protein ligase complex SCF(FBXL12), leading to proteasomal degradation. As to expression, widely expressed. Expressed in cells of the zona glomerulosa of the adrenal cortex.

It is found in the cytoplasm. The protein localises to the nucleus. It carries out the reaction L-seryl-[protein] + ATP = O-phospho-L-seryl-[protein] + ADP + H(+). The catalysed reaction is L-threonyl-[protein] + ATP = O-phospho-L-threonyl-[protein] + ADP + H(+). With respect to regulation, activated by Ca(2+)/calmodulin. Binding of calmodulin results in conformational change that relieves intrasteric autoinhibition and allows phosphorylation of Thr-177 within the activation loop by CaMKK1 or CaMKK2. Phosphorylation of Thr-177 results in several fold increase in total activity. Unlike CaMK4, is unable to exhibit autonomous activity after Ca(2+)/calmodulin activation. In terms of biological role, calcium/calmodulin-dependent protein kinase that operates in the calcium-triggered CaMKK-CaMK1 signaling cascade and, upon calcium influx, regulates transcription activators activity, cell cycle, hormone production, cell differentiation, actin filament organization and neurite outgrowth. Recognizes the substrate consensus sequence [MVLIF]-x-R-x(2)-[ST]-x(3)-[MVLIF]. Regulates axonal extension and growth cone motility in hippocampal and cerebellar nerve cells. Upon NMDA receptor-mediated Ca(2+) elevation, promotes dendritic growth in hippocampal neurons and is essential in synapses for full long-term potentiation (LTP) and ERK2-dependent translational activation. Downstream of NMDA receptors, promotes the formation of spines and synapses in hippocampal neurons by phosphorylating ARHGEF7/BETAPIX on 'Ser-694', which results in the enhancement of ARHGEF7 activity and activation of RAC1. Promotes neuronal differentiation and neurite outgrowth by activation and phosphorylation of MARK2 on 'Ser-91', 'Ser-92', 'Ser-93' and 'Ser-294'. Promotes nuclear export of HDAC5 and binding to 14-3-3 by phosphorylation of 'Ser-259' and 'Ser-498' in the regulation of muscle cell differentiation. Regulates NUMB-mediated endocytosis by phosphorylation of NUMB on 'Ser-276' and 'Ser-295'. Involved in the regulation of basal and estrogen-stimulated migration of medulloblastoma cells through ARHGEF7/BETAPIX phosphorylation. Is required for proper activation of cyclin-D1/CDK4 complex during G1 progression in diploid fibroblasts. Plays a role in K(+) and ANG2-mediated regulation of the aldosterone synthase (CYP11B2) to produce aldosterone in the adrenal cortex. Phosphorylates EIF4G3/eIF4GII. In vitro phosphorylates CREB1, ATF1, CFTR, MYL9 and SYN1/synapsin I. This is Calcium/calmodulin-dependent protein kinase type 1 (CAMK1) from Homo sapiens (Human).